We begin with the raw amino-acid sequence, 332 residues long: Probable electron transfer flavoprotein subunit alpha, mitochondrial (332 aa).

275 to 303 provides a ligand contact to FAD; it reads LYIAIGISGAIQHLAGMKDSKVIVAINKD.

It belongs to the ETF alpha-subunit/FixB family. As to quaternary structure, heterodimer of an alpha and a beta subunit. Requires FAD as cofactor.

It is found in the mitochondrion matrix. In terms of biological role, the electron transfer flavoprotein serves as a specific electron acceptor for several dehydrogenases, including five acyl-CoA dehydrogenases, glutaryl-CoA and sarcosine dehydrogenase. It transfers the electrons to the main mitochondrial respiratory chain via ETF-ubiquinone oxidoreductase (ETF dehydrogenase). The polypeptide is Probable electron transfer flavoprotein subunit alpha, mitochondrial (Caenorhabditis elegans).